The chain runs to 267 residues: Ubiquinone biosynthesis protein COQ4, mitochondrial (267 aa).

Residues 1-17 (MSRLKIPSQLLRGGRGF) constitute a mitochondrion transit peptide. Zn(2+) is bound by residues H153, D154, H157, and E169.

This sequence belongs to the COQ4 family. As to quaternary structure, component of a multi-subunit COQ enzyme complex, composed of at least COQ3, COQ4, COQ5, COQ6, COQ7 and COQ9. It depends on Zn(2+) as a cofactor.

The protein localises to the mitochondrion inner membrane. It carries out the reaction a 4-hydroxy-3-methoxy-5-(all-trans-polyprenyl)benzoate + H(+) = a 2-methoxy-6-(all-trans-polyprenyl)phenol + CO2. The protein operates within cofactor biosynthesis; ubiquinone biosynthesis. In terms of biological role, lyase that catalyzes the C1-decarboxylation of 4-hydroxy-3-methoxy-5-(all-trans-polyprenyl)benzoic acid into 2-methoxy-6-(all-trans-polyprenyl)phenol during ubiquinone biosynthesis. The chain is Ubiquinone biosynthesis protein COQ4, mitochondrial from Arthroderma otae (strain ATCC MYA-4605 / CBS 113480) (Microsporum canis).